We begin with the raw amino-acid sequence, 183 residues long: SAGA-associated factor 11 homolog (183 aa).

The SGF11-type zinc finger occupies cysteine 98 to cysteine 119. The disordered stretch occupies residues glycine 140–proline 167. The span at alanine 146–tryptophan 156 shows a compositional bias: acidic residues.

It belongs to the SGF11 family. In terms of assembly, component of some SAGA transcription coactivator-HAT complexes. Within the SAGA complex, participates in a subcomplex of SAGA called the DUB module (deubiquitination module).

It localises to the nucleus. In terms of biological role, component of the transcription regulatory histone acetylation (HAT) complex SAGA, a multiprotein complex that activates transcription by remodeling chromatin and mediating histone acetylation and deubiquitination. Within the SAGA complex, participates in a subcomplex that specifically deubiquitinates histone H2B. The SAGA complex is recruited to specific gene promoters by activators, where it is required for transcription. The chain is SAGA-associated factor 11 homolog from Culex quinquefasciatus (Southern house mosquito).